The following is a 796-amino-acid chain: Leucine--tRNA ligase (796 aa).

A 'HIGH' region motif is present at residues 40–51; that stretch reads PYPSASGLHVGH. Residues 569-573 carry the 'KMSKS' region motif; that stretch reads KMSKS. K572 contacts ATP.

It belongs to the class-I aminoacyl-tRNA synthetase family.

It localises to the cytoplasm. It carries out the reaction tRNA(Leu) + L-leucine + ATP = L-leucyl-tRNA(Leu) + AMP + diphosphate. In Bdellovibrio bacteriovorus (strain ATCC 15356 / DSM 50701 / NCIMB 9529 / HD100), this protein is Leucine--tRNA ligase.